A 46-amino-acid chain; its full sequence is Endochitinase 3 (46 aa).

The tract at residues 1 to 21 is disordered; the sequence is MTPQGNKPSSHDVITGRWTPS.

It belongs to the glycosyl hydrolase 19 family. Chitinase class I subfamily.

The enzyme catalyses Random endo-hydrolysis of N-acetyl-beta-D-glucosaminide (1-&gt;4)-beta-linkages in chitin and chitodextrins.. Its function is as follows. Defense against chitin-containing fungal and bacterial pathogens. The chain is Endochitinase 3 from Arachis hypogaea (Peanut).